The chain runs to 204 residues: Viral interleukin-6 homolog (204 aa).

The signal sequence occupies residues Met-1–Gly-22.

This sequence belongs to the IL-6 superfamily. In terms of assembly, interacts with host IL6ST.

Initiates signal transduction through binding to interleukin-6 receptor subunit beta IL6ST, independently of the cognate IL6 receptor IL6R. In infected primary effusion lymphoma cells, promotes proliferation of cells, protects them from apoptosis, and promotes immune evasion of interferon activity. Also drives blood to lymphatic endothelial cell differentiation. The protein is Viral interleukin-6 homolog (K2) of Homo sapiens (Human).